The chain runs to 289 residues: Segregation and condensation protein A (289 aa).

Positions 1 to 18 (MSEDRRSPTDEAPREGEL) are enriched in basic and acidic residues. Residues 1 to 24 (MSEDRRSPTDEAPREGELPRSPGD) form a disordered region.

Belongs to the ScpA family. In terms of assembly, component of the Structural Maintenance of Chromosome (SMC) condensin-like complex composed of ScpA, ScpB and the Smc homodimer. ScpA and ScpB bind to the head domain of Smc. The presence of the three proteins is required for the association of the complex with DNA.

The protein resides in the cytoplasm. A conditionally essential component of the chromosome segregation machinery. Participates in chromosomal partition during cell division. Important for positioning of ParB-parS complexes (ori of replication) and of the ter replication site, as well as for segration of the ParB-parS complex and thus chromosome segregation. May act via the formation of a condensin-like complex containing Smc, ScpA and ScpB that pulls DNA away from mid-cell into both cell halves. In Myxococcus xanthus (strain DK1622), this protein is Segregation and condensation protein A.